The primary structure comprises 235 residues: Orotidine 5'-phosphate decarboxylase (235 aa).

Substrate is bound by residues Asp-16, Lys-38, 65–74 (DLKLHDIGNT), Thr-120, Arg-181, Gln-190, Gly-210, and Arg-211. The Proton donor role is filled by Lys-67.

This sequence belongs to the OMP decarboxylase family. Type 1 subfamily. Homodimer.

The catalysed reaction is orotidine 5'-phosphate + H(+) = UMP + CO2. Its pathway is pyrimidine metabolism; UMP biosynthesis via de novo pathway; UMP from orotate: step 2/2. Functionally, catalyzes the decarboxylation of orotidine 5'-monophosphate (OMP) to uridine 5'-monophosphate (UMP). This Rhodopseudomonas palustris (strain BisA53) protein is Orotidine 5'-phosphate decarboxylase.